An 89-amino-acid chain; its full sequence is Small ribosomal subunit protein uS14A (89 aa).

This sequence belongs to the universal ribosomal protein uS14 family. As to quaternary structure, part of the 30S ribosomal subunit. Contacts proteins S3 and S10.

Functionally, binds 16S rRNA, required for the assembly of 30S particles and may also be responsible for determining the conformation of the 16S rRNA at the A site. This chain is Small ribosomal subunit protein uS14A, found in Staphylococcus epidermidis (strain ATCC 35984 / DSM 28319 / BCRC 17069 / CCUG 31568 / BM 3577 / RP62A).